Here is a 276-residue protein sequence, read N- to C-terminus: Large ribosomal subunit protein uL2 (276 aa).

The segment at methionine 225–lysine 276 is disordered. A compositionally biased stretch (basic residues) spans lysine 257–lysine 276.

It belongs to the universal ribosomal protein uL2 family. Part of the 50S ribosomal subunit. Forms a bridge to the 30S subunit in the 70S ribosome.

Functionally, one of the primary rRNA binding proteins. Required for association of the 30S and 50S subunits to form the 70S ribosome, for tRNA binding and peptide bond formation. It has been suggested to have peptidyltransferase activity; this is somewhat controversial. Makes several contacts with the 16S rRNA in the 70S ribosome. The protein is Large ribosomal subunit protein uL2 of Desulfitobacterium hafniense (strain DSM 10664 / DCB-2).